The chain runs to 665 residues: MSSQDLYANAATDKPLMQVKGLIREFKAGEQTIRVLHDINLTIHQGEMVAIIGQSGSGKSTLMNILGCLDQATAGDYQVFGQSVNRLVPDELAKLRREHFGFIFQRYHLLGDISARDNVSVPAVYAGMDGQARNERAEKLLSDLGLADKVNNRPSQLSGGQQQRVSIARALMNGGDIILADEPTGALDSKSGKDVVQILKDLNAQGHTIIMVTHDPSLAAQAERVIEIKDGYIIADYKNEDYQRPAAQPASIIDKHRKSAFGSFIDRLLESFKMSLLAMRAHKMRTLLTMLGIIIGIASVVSVVGLGKGSQEQILSNISSLGTNTITVTDGYPYGDPRRQYNDDNLTPQDAQAVADQPYVLSVSPQLNSNMSVRYRNVQEAASISGVGKDYLDVSGETLAMGQGFDEQSILRRTQDIIIDSNAHKTFFPTIANPIGEVLLIGSVPGRVIGVLEPNEGGFSRSVDTPTLYMPYTTMMSRLIGSAYIESFIALIDNNISSSAAESAISDLMTSRHGTDDFRIRNSDSIRQTIESTTAALTLLISSIAIISLIVGGIGVMNIMLVSVTERTNEIGVRMAVGARQSDIMQQFLIEAILVCILGGLLGIGLAFAIGELINRVGGDSFKVIYSSTSIIAAFVCSTLIGVVFGFLPARNAAKLDPVEALSRD.

In terms of domain architecture, ABC transporter spans 17 to 255 (MQVKGLIREF…AAQPASIIDK (239 aa)). 53–60 (GQSGSGKS) is an ATP binding site. 4 consecutive transmembrane segments (helical) span residues 287–307 (LLTM…VGLG), 544–564 (IAII…LVSV), 588–608 (FLIE…GLAF), and 630–650 (SIIA…FLPA).

This sequence belongs to the ABC transporter superfamily. Macrolide exporter (TC 3.A.1.122) family. As to quaternary structure, homodimer. Part of the tripartite efflux system MacAB-TolC, which is composed of an inner membrane transporter, MacB, a periplasmic membrane fusion protein, MacA, and an outer membrane component, TolC. The complex forms a large protein conduit and can translocate molecules across both the inner and outer membranes. Interacts with MacA.

It is found in the cell inner membrane. Part of the tripartite efflux system MacAB-TolC. MacB is a non-canonical ABC transporter that contains transmembrane domains (TMD), which form a pore in the inner membrane, and an ATP-binding domain (NBD), which is responsible for energy generation. Confers resistance against macrolides. This is Macrolide export ATP-binding/permease protein MacB from Psychrobacter cryohalolentis (strain ATCC BAA-1226 / DSM 17306 / VKM B-2378 / K5).